Consider the following 449-residue polypeptide: Delta(8)-fatty-acid desaturase 1 (449 aa).

A Cytochrome b5 heme-binding domain is found at 7-91; that stretch reads KKYITNEDLK…IRDFQVSEVS (85 aa). Residues His42 and His65 each contribute to the heme site. 2 helical membrane passes run 113–133 and 138–158; these read VTLY…YGVL and VFAH…SAYI. The Histidine box-1 motif lies at 160 to 164; it reads HDSGH. A helical membrane pass occupies residues 173–195; the sequence is YNRFAQLLSGNCLTGISIAWWKW. The short motif at 197-201 is the Histidine box-2 element; it reads HNAHH. Transmembrane regions (helical) follow at residues 255–275, 284–304, and 311–331; these read YYPV…LLLF, ALNF…VSCL, and FFFV…FTLN. A Histidine box-3 motif is present at residues 374–378; it reads QLEHH.

This sequence belongs to the fatty acid desaturase type 1 family. The cofactor is Fe cation. Highly expressed in flowers. Expressed in roots, leaves, stems and siliques.

Its subcellular location is the endoplasmic reticulum membrane. The catalysed reaction is an N-acyl-(4R)-4-hydroxysphinganine + 2 Fe(II)-[cytochrome b5] + O2 + 2 H(+) = a (4R,8E)-4-hydroxysphingenine ceramide + 2 Fe(III)-[cytochrome b5] + 2 H2O. It catalyses the reaction an N-acyl-(4R)-4-hydroxysphinganine + 2 Fe(II)-[cytochrome b5] + O2 + 2 H(+) = a (4R,8Z)-4-hydroxysphing-8-enine ceramide + 2 Fe(III)-[cytochrome b5] + 2 H2O. Plays a major role as delta(8)-fatty-acid desaturase which introduces a double bond at the 8-position in the long-chain base (LCB) of ceramides with or without a hydroxy group at the 4-position. The enzyme produces both the 8E and 8Z isomers (in a 4:1 ratio). This structural modification contributes to the quantitative partitioning of ceramides between the two major sphingolipid classes, glucosylceramides and glycosylinositolphosphoryl ceramides. Sphingolipids are important membrane components involved in environmental stress responses, such as resistance to chilling, and act as cell signaling molecules. The protein is Delta(8)-fatty-acid desaturase 1 (SLD1) of Arabidopsis thaliana (Mouse-ear cress).